A 723-amino-acid chain; its full sequence is Catalase-peroxidase (723 aa).

The tryptophyl-tyrosyl-methioninium (Trp-Tyr) (with M-251) cross-link spans 96–225 (WHAAGSYRVA…LAAVMMGLIY (130 aa)). The Proton acceptor role is filled by His97. Positions 225-251 (YVNPEGVDGNPDPLKTAEDVRVTFARM) form a cross-link, tryptophyl-tyrosyl-methioninium (Tyr-Met) (with W-96). His266 lines the heme b pocket.

Belongs to the peroxidase family. Peroxidase/catalase subfamily. In terms of assembly, homodimer or homotetramer. Requires heme b as cofactor. Post-translationally, formation of the three residue Trp-Tyr-Met cross-link is important for the catalase, but not the peroxidase activity of the enzyme.

It catalyses the reaction H2O2 + AH2 = A + 2 H2O. It carries out the reaction 2 H2O2 = O2 + 2 H2O. Bifunctional enzyme with both catalase and broad-spectrum peroxidase activity. This Alkalilimnicola ehrlichii (strain ATCC BAA-1101 / DSM 17681 / MLHE-1) protein is Catalase-peroxidase.